Here is a 225-residue protein sequence, read N- to C-terminus: DNA repair protein RecO (225 aa).

It belongs to the RecO family.

Involved in DNA repair and RecF pathway recombination. This is DNA repair protein RecO from Clostridium perfringens (strain ATCC 13124 / DSM 756 / JCM 1290 / NCIMB 6125 / NCTC 8237 / Type A).